The sequence spans 308 residues: Ornithine carbamoyltransferase (308 aa).

Carbamoyl phosphate is bound by residues serine 56–threonine 59, glutamine 83, arginine 107, and histidine 134–glutamine 137. L-ornithine contacts are provided by residues asparagine 165, aspartate 225, and serine 229–methionine 230. Carbamoyl phosphate contacts are provided by residues cysteine 266–leucine 267 and arginine 294.

The protein belongs to the aspartate/ornithine carbamoyltransferase superfamily. OTCase family.

It is found in the cytoplasm. It carries out the reaction carbamoyl phosphate + L-ornithine = L-citrulline + phosphate + H(+). Its pathway is amino-acid biosynthesis; L-arginine biosynthesis; L-arginine from L-ornithine and carbamoyl phosphate: step 1/3. Its function is as follows. Reversibly catalyzes the transfer of the carbamoyl group from carbamoyl phosphate (CP) to the N(epsilon) atom of ornithine (ORN) to produce L-citrulline. The sequence is that of Ornithine carbamoyltransferase from Roseobacter denitrificans (strain ATCC 33942 / OCh 114) (Erythrobacter sp. (strain OCh 114)).